The sequence spans 304 residues: Small ribosomal subunit protein uS2 (304 aa).

Residue serine 2 is modified to N-acetylserine. Laminin-binding stretches follow at residues 161–180 (IPCN…MLAR) and 205–229 (RDPE…EFQG). [DE]-W-[ST] repeat units lie at residues 230-232 (EWS), 245-247 (DWS), 275-277 (DWS), 284-286 (DWS), and 302-304 (DWS). Residues 242–304 (EVADWSEGVA…DWGGATSDWS (63 aa)) form a laminin-binding region. Positions 257–304 (IQQFPAGTPAPAPAVKTEDWSTQPATEDWSTAPTAQASDWGGATSDWS) are disordered. A compositionally biased stretch (polar residues) spans 276-293 (WSTQPATEDWSTAPTAQA).

Belongs to the universal ribosomal protein uS2 family. As to quaternary structure, monomer (37LRP) and homodimer (67LR). Component of the small ribosomal subunit. Mature ribosomes consist of a small (40S) and a large (60S) subunit. The 40S subunit contains about 33 different proteins and 1 molecule of RNA (18S). The 60S subunit contains about 49 different proteins and 3 molecules of RNA (28S, 5.8S and 5S). Interacts with rps21. Interacts with several laminins including at least lamb1. Interacts with mdk. Post-translationally, acylated. Acylation may be a prerequisite for conversion of the monomeric 37 kDa laminin receptor precursor (37LRP) to the mature dimeric 67 kDa laminin receptor (67LR), and may provide a mechanism for membrane association. Cleaved by stromelysin-3 (ST3) at the cell surface. Cleavage by stromelysin-3 may be a mechanism to alter cell-extracellular matrix interactions.

It is found in the cell membrane. It localises to the cytoplasm. The protein resides in the nucleus. Functionally, required for the assembly and/or stability of the 40S ribosomal subunit. Required for the processing of the 20S rRNA-precursor to mature 18S rRNA in a late step of the maturation of 40S ribosomal subunits. Also functions as a cell surface receptor for laminin. Plays a role in cell adhesion to the basement membrane and in the consequent activation of signaling transduction pathways. May play a role in cell fate determination and tissue morphogenesis. This is Small ribosomal subunit protein uS2 (rpsa) from Sparus aurata (Gilthead sea bream).